We begin with the raw amino-acid sequence, 231 residues long: 7-cyano-7-deazaguanine synthase (231 aa).

Residue Phe-8–Leu-18 participates in ATP binding. Positions 188, 197, 200, and 203 each coordinate Zn(2+).

Belongs to the QueC family. The cofactor is Zn(2+).

The catalysed reaction is 7-carboxy-7-deazaguanine + NH4(+) + ATP = 7-cyano-7-deazaguanine + ADP + phosphate + H2O + H(+). It functions in the pathway purine metabolism; 7-cyano-7-deazaguanine biosynthesis. Functionally, catalyzes the ATP-dependent conversion of 7-carboxy-7-deazaguanine (CDG) to 7-cyano-7-deazaguanine (preQ(0)). The protein is 7-cyano-7-deazaguanine synthase of Escherichia coli O1:K1 / APEC.